A 242-amino-acid polypeptide reads, in one-letter code: Small ribosomal subunit protein uS2 (242 aa).

The protein belongs to the universal ribosomal protein uS2 family.

In Idiomarina loihiensis (strain ATCC BAA-735 / DSM 15497 / L2-TR), this protein is Small ribosomal subunit protein uS2.